A 243-amino-acid chain; its full sequence is Octanoyltransferase (243 aa).

One can recognise a BPL/LPL catalytic domain in the interval 49 to 227 (PLAPQAVWLL…SLSDRFGLVW (179 aa)). Residues 91 to 98 (RGGEVTHH), 158 to 160 (AIG), and 171 to 173 (GLA) contribute to the substrate site. The active-site Acyl-thioester intermediate is Cys189.

It belongs to the LipB family.

The protein localises to the cytoplasm. It catalyses the reaction octanoyl-[ACP] + L-lysyl-[protein] = N(6)-octanoyl-L-lysyl-[protein] + holo-[ACP] + H(+). It participates in protein modification; protein lipoylation via endogenous pathway; protein N(6)-(lipoyl)lysine from octanoyl-[acyl-carrier-protein]: step 1/2. Functionally, catalyzes the transfer of endogenously produced octanoic acid from octanoyl-acyl-carrier-protein onto the lipoyl domains of lipoate-dependent enzymes. Lipoyl-ACP can also act as a substrate although octanoyl-ACP is likely to be the physiological substrate. In Prochlorococcus marinus (strain MIT 9313), this protein is Octanoyltransferase.